The chain runs to 90 residues: Probable Fe(2+)-trafficking protein (90 aa).

The protein belongs to the Fe(2+)-trafficking protein family.

Functionally, could be a mediator in iron transactions between iron acquisition and iron-requiring processes, such as synthesis and/or repair of Fe-S clusters in biosynthetic enzymes. The chain is Probable Fe(2+)-trafficking protein from Pseudomonas syringae pv. tomato (strain ATCC BAA-871 / DC3000).